The sequence spans 599 residues: Elongation factor 4 (599 aa).

The 183-residue stretch at 4-186 folds into the tr-type G domain; that stretch reads KFIRNFSIIA…AIIKHVPPPL (183 aa). Residues 16-21 and 133-136 each bind GTP; these read DHGKST and NKID.

It belongs to the TRAFAC class translation factor GTPase superfamily. Classic translation factor GTPase family. LepA subfamily.

The protein resides in the cell membrane. It catalyses the reaction GTP + H2O = GDP + phosphate + H(+). In terms of biological role, required for accurate and efficient protein synthesis under certain stress conditions. May act as a fidelity factor of the translation reaction, by catalyzing a one-codon backward translocation of tRNAs on improperly translocated ribosomes. Back-translocation proceeds from a post-translocation (POST) complex to a pre-translocation (PRE) complex, thus giving elongation factor G a second chance to translocate the tRNAs correctly. Binds to ribosomes in a GTP-dependent manner. The sequence is that of Elongation factor 4 from Ureaplasma parvum serovar 3 (strain ATCC 27815 / 27 / NCTC 11736).